Reading from the N-terminus, the 390-residue chain is MAAVAARAGGLLRLGAAGAERRRRGLRCAALVQGFLQPAVDDASQKRRVAHFTFQPDPESLQYGQTQKMNLFQSITSALDNSLAKDPTAVIFGEDVAFGGVFRCTVGLRDKYGKDRVFNTPLCEQGIVGFGIGIAVTGATAIAEIQFADYIFPAFDQIVNEAAKYRYRSGDLFNCGSLTIRAPWGCVGHGALYHSQSPEAFFAHCPGIKVVIPRSPFQAKGLLLSCIEDKNPCIFFEPKILYRAAVEQVPVEPYKIPLSQAEVIQEGSDVTLVAWGTQVHVIREVASMAQEKLGVSCEVIDLRTIVPWDVDTVCKSVIKTGRLLISHEAPLTGGFASEISSTVQEECFLNLEAPISRVCGYDTPFPHIFEPFYIPDKWKCYDALRKMINY.

The transit peptide at 1 to 48 (MAAVAARAGGLLRLGAAGAERRRRGLRCAALVQGFLQPAVDDASQKRR) directs the protein to the mitochondrion. Tyr150 serves as a coordination point for thiamine diphosphate. Residues Gly176, Leu178, Thr179, Cys226, and Asp229 each contribute to the K(+) site. Lys230 carries the N6-acetyllysine modification. Asn231 serves as a coordination point for K(+). Lys239 bears the N6-acetyllysine mark.

Heterotetramer of 2 alpha/BCKDHA and 2 beta chains/BCKDHB that forms the branched-chain alpha-keto acid decarboxylase (E1) component of the BCKD complex. The branched-chain alpha-ketoacid dehydrogenase is a large complex composed of three major building blocks E1, E2 and E3. It is organized around E2, a 24-meric cubic core composed of DBT, to which are associated 6 to 12 copies of E1, and approximately 6 copies of the dehydrogenase E3, a DLD dimer. Thiamine diphosphate serves as cofactor.

It is found in the mitochondrion matrix. It carries out the reaction N(6)-[(R)-lipoyl]-L-lysyl-[protein] + 3-methyl-2-oxobutanoate + H(+) = N(6)-[(R)-S(8)-2-methylpropanoyldihydrolipoyl]-L-lysyl-[protein] + CO2. Together with BCKDHA forms the heterotetrameric E1 subunit of the mitochondrial branched-chain alpha-ketoacid dehydrogenase (BCKD) complex. The BCKD complex catalyzes the multi-step oxidative decarboxylation of alpha-ketoacids derived from the branched-chain amino-acids valine, leucine and isoleucine producing CO2 and acyl-CoA which is subsequently utilized to produce energy. The E1 subunit catalyzes the first step with the decarboxylation of the alpha-ketoacid forming an enzyme-product intermediate. A reductive acylation mediated by the lipoylamide cofactor of E2 extracts the acyl group from the E1 active site for the next step of the reaction. The polypeptide is 2-oxoisovalerate dehydrogenase subunit beta, mitochondrial (Rattus norvegicus (Rat)).